The sequence spans 160 residues: 2-C-methyl-D-erythritol 2,4-cyclodiphosphate synthase (160 aa).

Residues D11 and H13 each coordinate a divalent metal cation. 4-CDP-2-C-methyl-D-erythritol 2-phosphate-binding positions include 11–13 (DVH) and 37–38 (HS). H45 contacts a divalent metal cation. 4-CDP-2-C-methyl-D-erythritol 2-phosphate-binding positions include 59–61 (DIG) and R145.

Belongs to the IspF family. In terms of assembly, homotrimer. Requires a divalent metal cation as cofactor.

The catalysed reaction is 4-CDP-2-C-methyl-D-erythritol 2-phosphate = 2-C-methyl-D-erythritol 2,4-cyclic diphosphate + CMP. Its pathway is isoprenoid biosynthesis; isopentenyl diphosphate biosynthesis via DXP pathway; isopentenyl diphosphate from 1-deoxy-D-xylulose 5-phosphate: step 4/6. Its function is as follows. Involved in the biosynthesis of isopentenyl diphosphate (IPP) and dimethylallyl diphosphate (DMAPP), two major building blocks of isoprenoid compounds. Catalyzes the conversion of 4-diphosphocytidyl-2-C-methyl-D-erythritol 2-phosphate (CDP-ME2P) to 2-C-methyl-D-erythritol 2,4-cyclodiphosphate (ME-CPP) with a corresponding release of cytidine 5-monophosphate (CMP). This is 2-C-methyl-D-erythritol 2,4-cyclodiphosphate synthase from Neisseria meningitidis serogroup B (strain ATCC BAA-335 / MC58).